A 150-amino-acid chain; its full sequence is Large ribosomal subunit protein uL11 (150 aa).

Belongs to the universal ribosomal protein uL11 family. As to quaternary structure, part of the ribosomal stalk of the 50S ribosomal subunit. Interacts with L10 and the large rRNA to form the base of the stalk. L10 forms an elongated spine to which L12 dimers bind in a sequential fashion forming a multimeric L10(L12)X complex. In terms of processing, one or more lysine residues are methylated.

Forms part of the ribosomal stalk which helps the ribosome interact with GTP-bound translation factors. In Cereibacter sphaeroides (strain ATCC 17025 / ATH 2.4.3) (Rhodobacter sphaeroides), this protein is Large ribosomal subunit protein uL11.